The sequence spans 135 residues: Galectin-1 (135 aa).

A2 carries the post-translational modification N-acetylalanine. In terms of domain architecture, Galectin spans 4-135 (GLVASNLNLK…DFKIKCVAFE (132 aa)). N6-acetyllysine is present on residues K13, K19, and K29. S30 carries the phosphoserine modification. Residues 45 to 49 (HFNPR), H53, N62, and 69 to 72 (WGAE) contribute to the a beta-D-galactoside site. K128 bears the N6-acetyllysine mark.

As to quaternary structure, homodimer. Binds LGALS3BP. Interacts with CD2, CD3, CD4, CD6, CD7, CD43, ALCAM and CD45. Interacts with laminin (via poly-N-acetyllactosamine). Interacts with SUSD2. Interacts with cargo receptor TMED10; the interaction mediates the translocation from the cytoplasm into the ERGIC (endoplasmic reticulum-Golgi intermediate compartment) and thereby secretion.

It localises to the secreted. The protein resides in the extracellular space. The protein localises to the extracellular matrix. It is found in the cytoplasm. In terms of biological role, lectin that binds beta-galactoside and a wide array of complex carbohydrates. Plays a role in regulating apoptosis, cell proliferation and cell differentiation. Inhibits CD45 protein phosphatase activity and therefore the dephosphorylation of Lyn kinase. Strong inducer of T-cell apoptosis. The polypeptide is Galectin-1 (LGALS1) (Sus scrofa (Pig)).